Here is a 230-residue protein sequence, read N- to C-terminus: Ion-translocating oxidoreductase complex subunit E (230 aa).

The next 6 helical transmembrane spans lie at 18–38, 39–59, 63–83, 86–106, 125–145, and 182–202; these read ALVQ…ATNA, LGLG…ISAL, TPAE…VSAV, LINA…PLIV, ALSA…MFVL, and PFLL…MLAV.

This sequence belongs to the NqrDE/RnfAE family. The complex is composed of six subunits: RnfA, RnfB, RnfC, RnfD, RnfE and RnfG.

It is found in the cell inner membrane. Its function is as follows. Part of a membrane-bound complex that couples electron transfer with translocation of ions across the membrane. The sequence is that of Ion-translocating oxidoreductase complex subunit E from Citrobacter koseri (strain ATCC BAA-895 / CDC 4225-83 / SGSC4696).